The chain runs to 717 residues: DNA ligase (717 aa).

Residues 44-48 (DADYD), 93-94 (SL), and Glu127 contribute to the NAD(+) site. The active-site N6-AMP-lysine intermediate is Lys129. Residues Arg150, Glu186, Lys302, and Lys326 each contribute to the NAD(+) site. Zn(2+) contacts are provided by Cys431, Cys434, Cys455, and Cys461. In terms of domain architecture, BRCT spans 639-717 (ATDSPVAGKT…EDEWLALIGG (79 aa)).

Belongs to the NAD-dependent DNA ligase family. LigA subfamily. Mg(2+) serves as cofactor. Mn(2+) is required as a cofactor.

It carries out the reaction NAD(+) + (deoxyribonucleotide)n-3'-hydroxyl + 5'-phospho-(deoxyribonucleotide)m = (deoxyribonucleotide)n+m + AMP + beta-nicotinamide D-nucleotide.. DNA ligase that catalyzes the formation of phosphodiester linkages between 5'-phosphoryl and 3'-hydroxyl groups in double-stranded DNA using NAD as a coenzyme and as the energy source for the reaction. It is essential for DNA replication and repair of damaged DNA. The sequence is that of DNA ligase from Rhizobium meliloti (strain 1021) (Ensifer meliloti).